Reading from the N-terminus, the 422-residue chain is Cyclin-A2 (422 aa).

M1 carries the post-translational modification N-acetylmethionine. Positions 1–62 are disordered; it reads MPGTSRHSGR…APQQKLKTRR (62 aa). The residue at position 5 (S5) is a Phosphoserine.

Belongs to the cyclin family. Cyclin AB subfamily. Interacts with the CDK1 and CDK2 protein kinases to form serine/threonine kinase holoenzyme complexes. Interacts with CDK1 (hyperphosphorylated form in G1 and underphosphorylated forms in S and G2). Interacts with CDK2; the interaction increases from G1 to G2. Interacts (associated with CDK2 but not with CDK1) with SCAPER; regulates the activity of CCNA2/CDK2 by transiently maintaining CCNA2 in the cytoplasm. Forms a ternary complex with CDK2 and CDKN1B; CDKN1B inhibits the kinase activity of CDK2 through conformational rearrangements. Interacts with INCA1. As to quaternary structure, (Microbial infection) Interacts with mouse cytomegalovirus/MCMV kinase M97; this interaction sequesters CCNA2 to the cytoplasm. In terms of processing, polyubiquitinated via 'Lys-11'-linked ubiquitin by the anaphase-promoting complex (APC/C), leading to its degradation by the proteasome. Deubiquitinated and stabilized by USP37 enables entry into S phase. Ubiquitinated during the G1 phase by the SCF(FBXO31) complex, leading to its proteasomal degradation. In terms of tissue distribution, ubiquitous. In the testis, expressed in germ cells and in the ovary, in both germline and somatic cells.

It localises to the nucleus. The protein localises to the cytoplasm. Functionally, cyclin which controls both the G1/S and the G2/M transition phases of the cell cycle. Functions through the formation of specific serine/threonine kinase holoenzyme complexes with the cyclin-dependent protein kinases CDK1 and CDK2. The cyclin subunit confers the substrate specificity of these complexes and differentially interacts with and activates CDK1 and CDK2 throughout the cell cycle. The polypeptide is Cyclin-A2 (Mus musculus (Mouse)).